The chain runs to 397 residues: Tryptophan synthase beta chain (397 aa).

N6-(pyridoxal phosphate)lysine is present on Lys87.

Belongs to the TrpB family. As to quaternary structure, tetramer of two alpha and two beta chains. Pyridoxal 5'-phosphate serves as cofactor.

It carries out the reaction (1S,2R)-1-C-(indol-3-yl)glycerol 3-phosphate + L-serine = D-glyceraldehyde 3-phosphate + L-tryptophan + H2O. Its pathway is amino-acid biosynthesis; L-tryptophan biosynthesis; L-tryptophan from chorismate: step 5/5. Its function is as follows. The beta subunit is responsible for the synthesis of L-tryptophan from indole and L-serine. The chain is Tryptophan synthase beta chain from Escherichia fergusonii (strain ATCC 35469 / DSM 13698 / CCUG 18766 / IAM 14443 / JCM 21226 / LMG 7866 / NBRC 102419 / NCTC 12128 / CDC 0568-73).